Consider the following 505-residue polypeptide: Lysine--tRNA ligase (505 aa).

Residues Glu-415 and Glu-422 each coordinate Mg(2+).

It belongs to the class-II aminoacyl-tRNA synthetase family. Homodimer. Mg(2+) is required as a cofactor.

Its subcellular location is the cytoplasm. The enzyme catalyses tRNA(Lys) + L-lysine + ATP = L-lysyl-tRNA(Lys) + AMP + diphosphate. The protein is Lysine--tRNA ligase of Xanthomonas oryzae pv. oryzae (strain MAFF 311018).